Here is a 461-residue protein sequence, read N- to C-terminus: Siroheme synthase (461 aa).

The interval 1–204 (MDYFPIFCQL…GDTTQAQQQV (204 aa)) is precorrin-2 dehydrogenase /sirohydrochlorin ferrochelatase. Residues 22–23 (EV) and 43–44 (GR) contribute to the NAD(+) site. S128 bears the Phosphoserine mark. Positions 216 to 461 (GEVTLVGAGP…NWFRCEAASA (246 aa)) are uroporphyrinogen-III C-methyltransferase. P225 contributes to the S-adenosyl-L-methionine binding site. Catalysis depends on D248, which acts as the Proton acceptor. The active-site Proton donor is K270. S-adenosyl-L-methionine is bound by residues 301–303 (GGD), I306, 331–332 (TA), M382, and G411.

It in the N-terminal section; belongs to the precorrin-2 dehydrogenase / sirohydrochlorin ferrochelatase family. In the C-terminal section; belongs to the precorrin methyltransferase family.

The catalysed reaction is uroporphyrinogen III + 2 S-adenosyl-L-methionine = precorrin-2 + 2 S-adenosyl-L-homocysteine + H(+). The enzyme catalyses precorrin-2 + NAD(+) = sirohydrochlorin + NADH + 2 H(+). It catalyses the reaction siroheme + 2 H(+) = sirohydrochlorin + Fe(2+). It functions in the pathway cofactor biosynthesis; adenosylcobalamin biosynthesis; precorrin-2 from uroporphyrinogen III: step 1/1. It participates in cofactor biosynthesis; adenosylcobalamin biosynthesis; sirohydrochlorin from precorrin-2: step 1/1. The protein operates within porphyrin-containing compound metabolism; siroheme biosynthesis; precorrin-2 from uroporphyrinogen III: step 1/1. Its pathway is porphyrin-containing compound metabolism; siroheme biosynthesis; siroheme from sirohydrochlorin: step 1/1. It functions in the pathway porphyrin-containing compound metabolism; siroheme biosynthesis; sirohydrochlorin from precorrin-2: step 1/1. Functionally, multifunctional enzyme that catalyzes the SAM-dependent methylations of uroporphyrinogen III at position C-2 and C-7 to form precorrin-2 via precorrin-1. Then it catalyzes the NAD-dependent ring dehydrogenation of precorrin-2 to yield sirohydrochlorin. Finally, it catalyzes the ferrochelation of sirohydrochlorin to yield siroheme. This Edwardsiella ictaluri (strain 93-146) protein is Siroheme synthase.